The following is a 223-amino-acid chain: UPF0441 protein YgiB (223 aa).

The span at Thr178 to Thr195 shows a compositional bias: low complexity. A disordered region spans residues Thr178 to Gly223. The segment covering Ala204 to Gly223 has biased composition (polar residues).

Belongs to the UPF0441 family.

The protein is UPF0441 protein YgiB of Shigella flexneri serotype 5b (strain 8401).